The primary structure comprises 369 residues: Ferredoxin--NADP reductase, chloroplastic (369 aa).

The transit peptide at 1–55 directs the protein to the chloroplast; it reads MTTAVTAAVSFPSTKTTSLSARSSSVISPDKISYKKVPLYYRNVSATGKMGPIRA. The 123-residue stretch at 90–212 folds into the FAD-binding FR-type domain; that stretch reads KTPYVGRCLL…TGPVGKEMLM (123 aa). FAD-binding positions include 148 to 151, 169 to 171, Tyr-175, 186 to 188, and Thr-227; these read RLYS, CVK, and VCS. NADP(+) contacts are provided by Ser-151 and Lys-171. NADP(+) is bound by residues Thr-227, 259–260, 289–290, 299–301, 328–329, and Glu-367; these read VP, SR, KMY, and GL.

This sequence belongs to the ferredoxin--NADP reductase type 1 family. Requires FAD as cofactor.

The protein localises to the plastid. Its subcellular location is the chloroplast stroma. It localises to the chloroplast thylakoid membrane. The enzyme catalyses 2 reduced [2Fe-2S]-[ferredoxin] + NADP(+) + H(+) = 2 oxidized [2Fe-2S]-[ferredoxin] + NADPH. It participates in energy metabolism; photosynthesis. Its function is as follows. May play a key role in regulating the relative amounts of cyclic and non-cyclic electron flow to meet the demands of the plant for ATP and reducing power. In Spinacia oleracea (Spinach), this protein is Ferredoxin--NADP reductase, chloroplastic (PETH).